The primary structure comprises 1551 residues: Dual oxidase 1 (1551 aa).

Residues 1-21 (MGFCLALTWTFLVGSWTSMGA) form the signal peptide. At 22–596 (QKPISWEVQR…YFEGSGFGFG (575 aa)) the chain is on the extracellular side. Residues 26–593 (SWEVQRFDGW…MQDYFEGSGF (568 aa)) are peroxidase-like; mediates peroxidase activity. Asn-94 is a glycosylation site (N-linked (GlcNAc...) asparagine). Positions 197 to 222 (LASGPDPAFPRNAQPPLLMWSAPDPA) are disordered. Residues Asn-342, Asn-354, Asn-461, and Asn-534 are each glycosylated (N-linked (GlcNAc...) asparagine). A helical membrane pass occupies residues 597 to 617 (VTIGTLCCFPLVSLLSAWIVA). At 618–1044 (RLRKKNFKKL…KRFIENYRRH (427 aa)) the chain is on the cytoplasmic side. EF-hand domains are found at residues 815–850 (PQDM…FMKG), 851–886 (SPEE…FIEI), and 895–930 (QLTE…HDSE). Positions 828, 830, 832, 834, 839, 864, 866, 868, and 875 each coordinate Ca(2+). Positions 956–1248 (YISQEKICPS…GSFGLIQLPR (293 aa)) are interaction with TXNDC11. The helical transmembrane segment at 1045–1065 (IGCVAVFYAITGGLFLERAYY) threads the bilayer. Residues 1066–1080 (YAFGAHHMGITDTTR) are Extracellular-facing. Residues 1081 to 1101 (VGIILSRGTAASISFMFSYIL) traverse the membrane as a helical segment. Residues 1087 to 1269 (RGTAASISFM…YVGDKLVSLS (183 aa)) enclose the Ferric oxidoreductase domain. Residues 1102–1151 (LTMCRNLITFLRETFLNRYVPFDAAVDFHRLIASTAIVLTVLHSAGHVVN) are Cytoplasmic-facing. Residues 1152 to 1172 (VYLFSISPLSVLSCLFPGLFH) form a helical membrane-spanning segment. Topologically, residues 1173–1188 (NDGSEFPQKYYWWFFQ) are extracellular. A helical transmembrane segment spans residues 1189-1209 (TVPGLTGVMLLLVLAIMYVFA). The Cytoplasmic portion of the chain corresponds to 1210-1226 (SHHFRRHSFRGFWLTHH). A helical transmembrane segment spans residues 1227–1247 (LYILLYVLLIIHGSFGLIQLP). Residue Arg-1248 is a topological domain, extracellular. Residues 1249-1269 (FHIFFLVPALIYVGDKLVSLS) form a helical membrane-spanning segment. Positions 1270-1376 (RKKVEISVVK…DGPFGEGHQE (107 aa)) constitute an FAD-binding FR-type domain. Residues 1270–1551 (RKKVEISVVK…THFSHHYENF (282 aa)) lie on the Cytoplasmic side of the membrane.

In the N-terminal section; belongs to the peroxidase family. In terms of assembly, interacts with TPO and CYBA. Interacts with TXNDC11. In terms of processing, N-glycosylated. In terms of tissue distribution, expressed in thyrocytes (at protein level). Specifically expressed in thyroid.

It localises to the apical cell membrane. The enzyme catalyses NADH + O2 + H(+) = H2O2 + NAD(+). It carries out the reaction NADPH + O2 + H(+) = H2O2 + NADP(+). The protein operates within hormone biosynthesis; thyroid hormone biosynthesis. With respect to regulation, peroxidase activity is inhibited by aminobenzohydrazide. The NADPH oxidase activity is calcium-dependent. Functionally, generates hydrogen peroxide which is required for the activity of thyroid peroxidase/TPO and lactoperoxidase/LPO. Plays a role in thyroid hormones synthesis and lactoperoxidase-mediated antimicrobial defense at the surface of mucosa. May have its own peroxidase activity through its N-terminal peroxidase-like domain. The sequence is that of Dual oxidase 1 (DUOX1) from Canis lupus familiaris (Dog).